Consider the following 103-residue polypeptide: UPF0058 protein MJ1205 (103 aa).

Belongs to the UPF0058 family.

This chain is UPF0058 protein MJ1205, found in Methanocaldococcus jannaschii (strain ATCC 43067 / DSM 2661 / JAL-1 / JCM 10045 / NBRC 100440) (Methanococcus jannaschii).